The following is a 1151-amino-acid chain: Zinc finger protein ZFPM2 (1151 aa).

The span at 1 to 13 shows a compositional bias: basic residues; the sequence is MSRRKQSKPRQIK. A disordered region spans residues 1–102; it reads MSRRKQSKPR…ETDDWDGPGE (102 aa). 2 stretches are compositionally biased toward acidic residues: residues 18 to 33 and 70 to 82; these read DAIE…EETD and EGIQ…DGDT. Residues 244–277 form a CCHC FOG-type 1 zinc finger; that stretch reads IVNKDIFPCKSCGIWYRSERNLQAHLMYYCSGRQ. Cys252, Cys255, His268, and Cys273 together coordinate Zn(2+). The C2H2-type 1 zinc-finger motif lies at 296–320; sequence SLCPFPQCTKSFSNARALEMHLNSH. Lys324 is covalently cross-linked (Glycyl lysine isopeptide (Lys-Gly) (interchain with G-Cter in SUMO1)). 2 consecutive C2H2-type zinc fingers follow at residues 335–357 and 363–385; these read LKCT…LFSH and FRCN…QELH. Residues 389-487 form a disordered region; it reads GKLPRESDME…RLASSPVQPN (99 aa). Polar residues-rich tracts occupy residues 401–410 and 419–431; these read PSATEDSLQP and ELPQ…QTKD. Lys444 is covalently cross-linked (Glycyl lysine isopeptide (Lys-Gly) (interchain with G-Cter in SUMO2)). Residues 447–485 are compositionally biased toward polar residues; it reads LFLTNQRPEIQPTTNKQSFSYTKIKSEPSSPRLASSPVQ. Residue Lys471 forms a Glycyl lysine isopeptide (Lys-Gly) (interchain with G-Cter in SUMO1) linkage. At Ser532 the chain carries Phosphoserine. A CCHC FOG-type 2 zinc finger spans residues 542 to 575; it reads PLMPKGATCFECNITFNNLDNYLVHKKHYCSSRW. Zn(2+)-binding residues include Cys550, Cys553, His566, and Cys571. A Phosphoserine modification is found at Ser581. The segment at 636 to 683 is disordered; it reads GPNGKGHDKDFSTQTKKLSTSSNNDDKINGKPVDVKNPSVPLVDGESD. Residues 647–658 show a composition bias toward polar residues; it reads STQTKKLSTSSN. The CCHC FOG-type 3 zinc-finger motif lies at 681–714; that stretch reads ESDPNKTTCEACNITFSRHETYMVHKQYYCATRH. Residues Cys689, Cys692, His705, and Cys710 each coordinate Zn(2+). The short motif at 736 to 740 is the Nuclear localization signal element; sequence RKRRK. The segment at 829 to 835 is interaction with CTBP2; the sequence is PIDLSKK. A CCHC FOG-type 4 zinc finger spans residues 848–881; sequence KRLLDYHECTVCKISFNKVENYLAHKQNFCPVTA. Residues Cys856, Cys859, His872, and Cys877 each coordinate Zn(2+). Ser904 bears the Phosphoserine mark. Residues Lys915 and Lys955 each participate in a glycyl lysine isopeptide (Lys-Gly) (interchain with G-Cter in SUMO1) cross-link. Phosphoserine is present on Ser1014. Residues 1051 to 1095 are disordered; it reads DERPAANPQQENISQNPQHEDDHKSPSWISENPLAANENVSPGIP. Over residues 1057–1067 the composition is skewed to polar residues; that stretch reads NPQQENISQNP. Residues 1113–1146 form a CCHC FOG-type 5 zinc finger; it reads QAPTSGKYCRLCDIQFNNLSNFITHKKFYCSSHA. Positions 1121, 1124, 1137, and 1142 each coordinate Zn(2+).

It belongs to the FOG (Friend of GATA) family. As to quaternary structure, interacts with the N-terminal zinc-finger of GATA4, GATA5 and probably GATA6. Interacts with retinoid nuclear receptor RXRA when ligand bound. Interacts with corepressor CTBP2; this interaction is however not essential for corepressor activity. Able to bind GATA1 in vitro. Interacts with NR2F2 and NR2F6. Interacts with ATOH8; mediates indirect interaction with GATA4. Sumoylation reduces transcriptional repression activity. In terms of tissue distribution, widely expressed at low level.

The protein resides in the nucleus. Its function is as follows. Transcription regulator that plays a central role in heart morphogenesis and development of coronary vessels from epicardium, by regulating genes that are essential during cardiogenesis. Essential cofactor that acts via the formation of a heterodimer with transcription factors of the GATA family GATA4, GATA5 and GATA6. Such heterodimer can both activate or repress transcriptional activity, depending on the cell and promoter context. Also required in gonadal differentiation, possibly be regulating expression of SRY. Probably acts a corepressor of NR2F2. This chain is Zinc finger protein ZFPM2 (ZFPM2), found in Homo sapiens (Human).